We begin with the raw amino-acid sequence, 255 residues long: MAVTDRFARRATLSRSLRLLSEFRYEQPDPARFYGALAADTATLVSDLWLAARGESVAGRTLLDVGGGPGYFASAFAAAGVGYIGVEPDPNEMHAAGPAHAGGPGSFVRASGMALPFADDSVDICLSSNVAEHVPRPWQLGAEMLRVTRPGGLAVLSYTVWLGPFGGHEMGLSHYLGGARAAARYARRHGHPAKNNYGSSLFAVSAAEGLRWAEGTGTLIAAFPRYHPRWAWWMTSVPMLREFLVSNLVLVLSPR.

This sequence belongs to the methyltransferase superfamily.

This is an uncharacterized protein from Mycobacterium marinum (strain ATCC BAA-535 / M).